A 315-amino-acid polypeptide reads, in one-letter code: Probable integrase/recombinase aq_aa09 (315 aa).

The 78-residue stretch at 1 to 78 folds into the Core-binding (CB) domain; that stretch reads MEHFIDTYLY…EVRLFYEWLQ (78 aa). The Tyr recombinase domain maps to 106–313; that stretch reads SKKKYYSDDE…REKQLEAILE (208 aa). Active-site residues include R150, K186, H263, R266, and H289. Residue Y299 is the O-(3'-phospho-DNA)-tyrosine intermediate of the active site.

Belongs to the 'phage' integrase family.

Functionally, may function as an integrase. The polypeptide is Probable integrase/recombinase aq_aa09 (Aquifex aeolicus (strain VF5)).